Consider the following 227-residue polypeptide: Adapter protein MecA 1 (227 aa).

The protein belongs to the MecA family. As to quaternary structure, homodimer.

Enables the recognition and targeting of unfolded and aggregated proteins to the ClpC protease or to other proteins involved in proteolysis. Acts negatively in the development of competence by binding ComK and recruiting it to the ClpCP protease. When overexpressed, inhibits sporulation. Also involved in Spx degradation by ClpC. This Bacillus anthracis protein is Adapter protein MecA 1 (mecA1).